A 138-amino-acid chain; its full sequence is MAFYYKNNLGYQNIPYGYQLNDFRASFEKARTFDMEDDLEFCPSLSDEELVSIYQSTGLSPTSSSPSLSPMTPNLYPNVLPNVHPGVSNYTHHPLSGLHQNVGSRTRKSSGIPIIDPVTRAPAVLAGAVSSSRAKQMW.

At S110 the chain carries Phosphoserine.

It localises to the cytoplasm. Its subcellular location is the nucleus. This is an uncharacterized protein from Schizosaccharomyces pombe (strain 972 / ATCC 24843) (Fission yeast).